A 132-amino-acid polypeptide reads, in one-letter code: Agouti-signaling protein (132 aa).

The N-terminal stretch at 1–22 (MDVTRLLLATLLVFLCFFTAYS) is a signal peptide. Asn39 is a glycosylation site (N-linked (GlcNAc...) asparagine). Residues 60-88 (KQISRKEAEKKRSSKKEASMKKVARPRTP) form a disordered region. A compositionally biased stretch (basic and acidic residues) spans 63 to 79 (SRKEAEKKRSSKKEASM). 5 disulfide bridges follow: Cys93–Cys108, Cys100–Cys114, Cys107–Cys125, Cys111–Cys132, and Cys116–Cys123. An Agouti domain is found at 93–132 (CVATRDSCKPPAPACCDPCASCQCRFFRSACSCRVLSLNC).

It localises to the secreted. Its function is as follows. Involved in the regulation of melanogenesis. The binding of ASP to MC1R precludes alpha-MSH initiated signaling and thus blocks production of cAMP, leading to a down-regulation of eumelanogenesis (brown/black pigment) and thus increasing synthesis of pheomelanin (yellow/red pigment). The protein is Agouti-signaling protein (ASIP) of Macaca cyclopis (Taiwan macaque).